The following is a 556-amino-acid chain: 2-succinyl-5-enolpyruvyl-6-hydroxy-3-cyclohexene-1-carboxylate synthase (556 aa).

Belongs to the TPP enzyme family. MenD subfamily. In terms of assembly, homodimer. Mg(2+) serves as cofactor. It depends on Mn(2+) as a cofactor. Thiamine diphosphate is required as a cofactor.

The catalysed reaction is isochorismate + 2-oxoglutarate + H(+) = 5-enolpyruvoyl-6-hydroxy-2-succinyl-cyclohex-3-ene-1-carboxylate + CO2. The protein operates within quinol/quinone metabolism; 1,4-dihydroxy-2-naphthoate biosynthesis; 1,4-dihydroxy-2-naphthoate from chorismate: step 2/7. Its pathway is quinol/quinone metabolism; menaquinone biosynthesis. Catalyzes the thiamine diphosphate-dependent decarboxylation of 2-oxoglutarate and the subsequent addition of the resulting succinic semialdehyde-thiamine pyrophosphate anion to isochorismate to yield 2-succinyl-5-enolpyruvyl-6-hydroxy-3-cyclohexene-1-carboxylate (SEPHCHC). This chain is 2-succinyl-5-enolpyruvyl-6-hydroxy-3-cyclohexene-1-carboxylate synthase, found in Escherichia fergusonii (strain ATCC 35469 / DSM 13698 / CCUG 18766 / IAM 14443 / JCM 21226 / LMG 7866 / NBRC 102419 / NCTC 12128 / CDC 0568-73).